A 364-amino-acid polypeptide reads, in one-letter code: Ribosomal RNA large subunit methyltransferase M (364 aa).

Residues S187, 220-223 (CPGG), D239, D259, and D276 each bind S-adenosyl-L-methionine. The Proton acceptor role is filled by K305.

It belongs to the class I-like SAM-binding methyltransferase superfamily. RNA methyltransferase RlmE family. RlmM subfamily. Monomer.

Its subcellular location is the cytoplasm. It catalyses the reaction cytidine(2498) in 23S rRNA + S-adenosyl-L-methionine = 2'-O-methylcytidine(2498) in 23S rRNA + S-adenosyl-L-homocysteine + H(+). Functionally, catalyzes the 2'-O-methylation at nucleotide C2498 in 23S rRNA. The sequence is that of Ribosomal RNA large subunit methyltransferase M from Aeromonas salmonicida (strain A449).